Here is an 800-residue protein sequence, read N- to C-terminus: DNA topoisomerase 4 subunit A (800 aa).

Positions 31–495 (LPDVRDGLKP…EIEEIKIDKE (465 aa)) constitute a Topo IIA-type catalytic domain. Tyrosine 119 (O-(5'-phospho-DNA)-tyrosine intermediate) is an active-site residue.

This sequence belongs to the type II topoisomerase GyrA/ParC subunit family. ParC type 2 subfamily. In terms of assembly, heterotetramer composed of ParC and ParE.

It localises to the cell membrane. The enzyme catalyses ATP-dependent breakage, passage and rejoining of double-stranded DNA.. Its function is as follows. Topoisomerase IV is essential for chromosome segregation. It relaxes supercoiled DNA. Performs the decatenation events required during the replication of a circular DNA molecule. The polypeptide is DNA topoisomerase 4 subunit A (Staphylococcus aureus (strain Mu50 / ATCC 700699)).